The chain runs to 273 residues: Short-chain dehydrogenase fogB (273 aa).

NADP(+) is bound by residues Ile16, Asp66, Arg128, Tyr174, Lys178, Val207, and Thr209. Residue Tyr174 is the Proton donor of the active site. Lys178 acts as the Lowers pKa of active site Tyr in catalysis.

The protein belongs to the short-chain dehydrogenases/reductases (SDR) family.

Functionally, short-chain dehydrogenase; part of the gene cluster that mediates the biosynthesis of flavoglaucin and congeners (including aspergin, dihydroauroglaucin and auroglaucin), prenylated salicylaldehyde derivatives carrying a saturated or an unsaturated C-7 side chain. The PKS fogA releases the carboxylic acid (8E,10E,12E)-3,5,7-trihydroxytetradeca-8,10,12-trienoic acid as its product, as well as derivatives with one and two double bonds. FogA is indeed able to reduce the initial triketide, thus being at least partially responsible for the differently saturated heptyl side chains of flavoglaucin congeners. The oxidoreductases fogB, fogC and fogD modify the nascent polyketide in fogA-bound form and, together, fogA, fogB, fogC and fogD are necessary for the formation of the aromatic core and the cyclized PKS products are released as salicyl alcohols. In particular, fogB is responsible for oxidation of a hydroxyl group or reduction of remaining double bond(s) at the C-7 residue whereas fogD is probably involved in the reductive release of the modified PKS products. The cytochrome P450 monooxygenase fogE is then responsible for the hydroxylation at C-3 of the benzene ring. The fogE products are substrates of the prenyltransferase fogH and the prenylated benzyl alcohols are subsequently oxidized by the fogF to produce the final aryl aldehydes flavoglaucin and congeners. The short-chain dehydrogenase fogG does not seem to be involved in the biosynthesis of the prenylated salicylaldehyde derivatives. In Aspergillus ruber (strain CBS 135680), this protein is Short-chain dehydrogenase fogB.